The sequence spans 369 residues: 3-dehydroquinate synthase (369 aa).

Residues 72–77 (SGEKEK), 130–131 (TT), lysine 142, and lysine 151 each bind NAD(+). Zn(2+) contacts are provided by glutamate 184, histidine 247, and histidine 264.

It belongs to the sugar phosphate cyclases superfamily. Dehydroquinate synthase family. It depends on Co(2+) as a cofactor. Requires Zn(2+) as cofactor. The cofactor is NAD(+).

It is found in the cytoplasm. The enzyme catalyses 7-phospho-2-dehydro-3-deoxy-D-arabino-heptonate = 3-dehydroquinate + phosphate. Its pathway is metabolic intermediate biosynthesis; chorismate biosynthesis; chorismate from D-erythrose 4-phosphate and phosphoenolpyruvate: step 2/7. Catalyzes the conversion of 3-deoxy-D-arabino-heptulosonate 7-phosphate (DAHP) to dehydroquinate (DHQ). This chain is 3-dehydroquinate synthase, found in Bacillus cytotoxicus (strain DSM 22905 / CIP 110041 / 391-98 / NVH 391-98).